Reading from the N-terminus, the 556-residue chain is Testis-specific protein 10-interacting protein (556 aa).

A compositionally biased stretch (polar residues) spans 1–20; it reads MGQETNMLNAHQQLVRTSSG. Disordered stretches follow at residues 1–102 and 180–320; these read MGQE…SPRK and CTSI…GPWD. A compositionally biased stretch (basic residues) spans 75-85; it reads KDRRLRGRNKK. Acidic residues-rich tracts occupy residues 213–225 and 246–260; these read EPEE…LGAE and LEEE…EAED. The segment covering 266–278 has biased composition (basic residues); it reads PWRRRTSSRRKGR. Residues 304-320 show a composition bias toward basic and acidic residues; the sequence is EPQRRKPRAKELEGPWD. Residues 387-463 are a coiled coil; sequence LRAWELQQRE…ELQGIQHRVQ (77 aa). The disordered stretch occupies residues 503–556; that stretch reads AGKRDMEGAPRRHRSHRSVGARMEPSSQSPPKMEPTGSQADQHFAPNPDQELSP. Polar residues predominate over residues 527–543; the sequence is PSSQSPPKMEPTGSQAD.

This Bos taurus (Bovine) protein is Testis-specific protein 10-interacting protein (TSGA10IP).